The sequence spans 249 residues: Pyridoxine 5'-phosphate synthase (249 aa).

Position 7 (Asn7) interacts with 3-amino-2-oxopropyl phosphate. Residue 9 to 10 coordinates 1-deoxy-D-xylulose 5-phosphate; the sequence is DH. Arg18 lines the 3-amino-2-oxopropyl phosphate pocket. His43 acts as the Proton acceptor in catalysis. 1-deoxy-D-xylulose 5-phosphate is bound by residues Arg45 and His50. The active-site Proton acceptor is Glu70. Thr100 contributes to the 1-deoxy-D-xylulose 5-phosphate binding site. The Proton donor role is filled by His190. Residues Gly191 and 212–213 each bind 3-amino-2-oxopropyl phosphate; that span reads GH.

It belongs to the PNP synthase family. Homooctamer; tetramer of dimers.

It localises to the cytoplasm. It catalyses the reaction 3-amino-2-oxopropyl phosphate + 1-deoxy-D-xylulose 5-phosphate = pyridoxine 5'-phosphate + phosphate + 2 H2O + H(+). Its pathway is cofactor biosynthesis; pyridoxine 5'-phosphate biosynthesis; pyridoxine 5'-phosphate from D-erythrose 4-phosphate: step 5/5. In terms of biological role, catalyzes the complicated ring closure reaction between the two acyclic compounds 1-deoxy-D-xylulose-5-phosphate (DXP) and 3-amino-2-oxopropyl phosphate (1-amino-acetone-3-phosphate or AAP) to form pyridoxine 5'-phosphate (PNP) and inorganic phosphate. This is Pyridoxine 5'-phosphate synthase from Synechococcus sp. (strain CC9605).